Reading from the N-terminus, the 278-residue chain is 2-dehydro-3-deoxyphosphooctonate aldolase (278 aa).

This sequence belongs to the KdsA family.

The protein resides in the cytoplasm. It carries out the reaction D-arabinose 5-phosphate + phosphoenolpyruvate + H2O = 3-deoxy-alpha-D-manno-2-octulosonate-8-phosphate + phosphate. It functions in the pathway carbohydrate biosynthesis; 3-deoxy-D-manno-octulosonate biosynthesis; 3-deoxy-D-manno-octulosonate from D-ribulose 5-phosphate: step 2/3. Its pathway is bacterial outer membrane biogenesis; lipopolysaccharide biosynthesis. The protein is 2-dehydro-3-deoxyphosphooctonate aldolase of Bartonella tribocorum (strain CIP 105476 / IBS 506).